Reading from the N-terminus, the 328-residue chain is Diaminopimelate epimerase (328 aa).

Residues N14 and N73 each contribute to the substrate site. C82 serves as the catalytic Proton donor. Substrate is bound by residues 83 to 84, N170, N206, and 224 to 225; these read GN and ER. C233 acts as the Proton acceptor in catalysis. 234–235 is a binding site for substrate; sequence GT.

Belongs to the diaminopimelate epimerase family. As to quaternary structure, homodimer.

The protein resides in the cytoplasm. It catalyses the reaction (2S,6S)-2,6-diaminopimelate = meso-2,6-diaminopimelate. It participates in amino-acid biosynthesis; L-lysine biosynthesis via DAP pathway; DL-2,6-diaminopimelate from LL-2,6-diaminopimelate: step 1/1. Catalyzes the stereoinversion of LL-2,6-diaminopimelate (L,L-DAP) to meso-diaminopimelate (meso-DAP), a precursor of L-lysine and an essential component of the bacterial peptidoglycan. The sequence is that of Diaminopimelate epimerase from Listeria welshimeri serovar 6b (strain ATCC 35897 / DSM 20650 / CCUG 15529 / CIP 8149 / NCTC 11857 / SLCC 5334 / V8).